The primary structure comprises 252 residues: Protein TRANSPARENT TESTA 16 (252 aa).

The MADS-box domain occupies 1–61 (MGRGKIEIKK…GKLSEFCSEQ (61 aa)). Residues 86 to 176 (QEQLHHEMEL…YRWLHEHRAA (91 aa)) form the K-box domain. Residues 121-174 (NELDGLERQLEHSVLKVRERKNELMQQQLENLSRKRRMLEEDNNNMYRWLHEHR) are a coiled coil.

As to quaternary structure, interacts with AP1/AGL7, SEP1/AGL2, SEP2/AGL4, SEP3/AGL9 and AGL3/SEP4. As to expression, expressed in buds, flowers and immature seeds, but not in roots, stems, leaves, seedlings or siliques valves. Expression in seed coat is confined to the endothelium layer.

Its subcellular location is the nucleus. Functionally, transcription factor involved in the developmental regulation of the endothelium and in the accumulation of proanthocyanidins (PAs) or condensed tannins which give the seed its brown pigmentation after oxidation. Necessary for the normal activation of the BANYULS promoter in the endothelium body. Is required, together with AGL11/STK for the maternal control of endothelium formation, which is essential for female gametophyte development and fertilization, and seed formation. Interacts genetically with AGL1/SHP1 and AGL5/SHP2 in a partially antagonistic manner and represses AGL1/SHP1, AGL5/SHP2, and AGL8/FUL during flower development. Is essential for the coordination of cell divisions in ovule, seed coat development and endosperm formation. Mediates the crosstalk between endothelium and nucellus to ensure proper seed formation. Functions redundantly with AGL63/GOA to repress nucellus growth and promote its degeneration. Represses the negative regulator of autophagy and programmed cell death HVA22D in the proximal nucellus. Binds specifically to the CArG box DNA sequence 5'-CC (A/T)6 GG-3'. The chain is Protein TRANSPARENT TESTA 16 (TT16) from Arabidopsis thaliana (Mouse-ear cress).